The chain runs to 525 residues: Putative ribose/galactose/methyl galactoside import ATP-binding protein (525 aa).

A disordered region spans residues 1-20 (MSGSATASPPAKPDLPSSDG). 2 consecutive ABC transporter domains span residues 33-269 (LEIS…VGRE) and 279-523 (KPAG…SGHR). Residue 65–72 (GENGAGKS) participates in ATP binding.

It belongs to the ABC transporter superfamily. Carbohydrate importer 2 (CUT2) (TC 3.A.1.2) family.

The protein localises to the cell inner membrane. The catalysed reaction is D-ribose(out) + ATP + H2O = D-ribose(in) + ADP + phosphate + H(+). The enzyme catalyses D-galactose(out) + ATP + H2O = D-galactose(in) + ADP + phosphate + H(+). In terms of biological role, part of an ABC transporter complex involved in carbohydrate import. Could be involved in ribose, galactose and/or methyl galactoside import. Responsible for energy coupling to the transport system. This chain is Putative ribose/galactose/methyl galactoside import ATP-binding protein, found in Pseudomonas syringae pv. tomato (strain ATCC BAA-871 / DC3000).